A 96-amino-acid chain; its full sequence is RNA-binding protein Hfq (96 aa).

One can recognise a Sm domain in the interval 9–68 (DPYLNALRRERIPVSIYLVNGIKLQGQIESFDQFVILLKNTVNQMVYKHAISTVVPARSV). The segment at 65–96 (ARSVSHHNNPQQQQQHSQQTESAAPAAEPQAE) is disordered. Over residues 70 to 96 (HHNNPQQQQQHSQQTESAAPAAEPQAE) the composition is skewed to low complexity.

This sequence belongs to the Hfq family. In terms of assembly, homohexamer.

Functionally, RNA chaperone that binds small regulatory RNA (sRNAs) and mRNAs to facilitate mRNA translational regulation in response to envelope stress, environmental stress and changes in metabolite concentrations. Also binds with high specificity to tRNAs. The polypeptide is RNA-binding protein Hfq (Mannheimia succiniciproducens (strain KCTC 0769BP / MBEL55E)).